The chain runs to 688 residues: Elongation factor G (688 aa).

One can recognise a tr-type G domain in the interval 8-282 (ERTRNIGIMA…AVLDYLPAPT (275 aa)). Residues 17–24 (AHIDAGKT), 81–85 (DTPGH), and 135–138 (NKMD) each bind GTP.

This sequence belongs to the TRAFAC class translation factor GTPase superfamily. Classic translation factor GTPase family. EF-G/EF-2 subfamily.

It localises to the cytoplasm. Catalyzes the GTP-dependent ribosomal translocation step during translation elongation. During this step, the ribosome changes from the pre-translocational (PRE) to the post-translocational (POST) state as the newly formed A-site-bound peptidyl-tRNA and P-site-bound deacylated tRNA move to the P and E sites, respectively. Catalyzes the coordinated movement of the two tRNA molecules, the mRNA and conformational changes in the ribosome. In Clostridioides difficile (strain 630) (Peptoclostridium difficile), this protein is Elongation factor G.